Reading from the N-terminus, the 397-residue chain is RNA pseudouridine synthase 5 (397 aa).

The region spanning 64 to 114 is the S4 RNA-binding domain; sequence APLPGWIKRIRDGQITVDGEVATDPDMILREGSKLVYHRLPWQEPFAPHLL.

Belongs to the pseudouridine synthase RluA family.

It catalyses the reaction a uridine in RNA = a pseudouridine in RNA. In Oryza sativa subsp. japonica (Rice), this protein is RNA pseudouridine synthase 5.